Here is a 466-residue protein sequence, read N- to C-terminus: Cysteine--tRNA ligase (466 aa).

Position 29 (Cys-29) interacts with Zn(2+). A 'HIGH' region motif is present at residues 31–41 (PTVYNYIHIGN). Zn(2+) contacts are provided by Cys-209, His-234, and Glu-238. A 'KMSKS' region motif is present at residues 266–270 (KMSKS). Lys-269 lines the ATP pocket.

This sequence belongs to the class-I aminoacyl-tRNA synthetase family. In terms of assembly, monomer. Requires Zn(2+) as cofactor.

The protein resides in the cytoplasm. The enzyme catalyses tRNA(Cys) + L-cysteine + ATP = L-cysteinyl-tRNA(Cys) + AMP + diphosphate. In Lysinibacillus sphaericus (strain C3-41), this protein is Cysteine--tRNA ligase.